The following is a 197-amino-acid chain: Probable GTP-binding protein EngB (197 aa).

The region spanning 26–197 (ELPEIALAGR…EAWDAILEKL (172 aa)) is the EngB-type G domain. GTP contacts are provided by residues 34-41 (GRSNVGKS), 61-65 (GKTQL), 79-82 (DVPG), 146-149 (TKAD), and 178-180 (FSS). Ser-41 and Thr-63 together coordinate Mg(2+).

This sequence belongs to the TRAFAC class TrmE-Era-EngA-EngB-Septin-like GTPase superfamily. EngB GTPase family. Mg(2+) serves as cofactor.

In terms of biological role, necessary for normal cell division and for the maintenance of normal septation. The polypeptide is Probable GTP-binding protein EngB (Streptococcus pneumoniae (strain CGSP14)).